Consider the following 334-residue polypeptide: HTH-type transcriptional regulator RegA (334 aa).

Residues 1–57 enclose the HTH lacI-type domain; sequence MAASIKDVAREARVSIATVSRVLNNVDVVNEETKKKVMEAIKKLDYRPNIVARSLKT. The segment at residues 5 to 24 is a DNA-binding region (H-T-H motif); that stretch reads IKDVAREARVSIATVSRVLN.

In terms of biological role, involved in the regulation of amylase production. In Clostridium acetobutylicum (strain ATCC 824 / DSM 792 / JCM 1419 / IAM 19013 / LMG 5710 / NBRC 13948 / NRRL B-527 / VKM B-1787 / 2291 / W), this protein is HTH-type transcriptional regulator RegA (regA).